The primary structure comprises 144 residues: 3-hydroxyacyl-[acyl-carrier-protein] dehydratase FabZ (144 aa).

Residue His-48 is part of the active site.

This sequence belongs to the thioester dehydratase family. FabZ subfamily.

It localises to the cytoplasm. The catalysed reaction is a (3R)-hydroxyacyl-[ACP] = a (2E)-enoyl-[ACP] + H2O. Involved in unsaturated fatty acids biosynthesis. Catalyzes the dehydration of short chain beta-hydroxyacyl-ACPs and long chain saturated and unsaturated beta-hydroxyacyl-ACPs. The chain is 3-hydroxyacyl-[acyl-carrier-protein] dehydratase FabZ from Listeria innocua serovar 6a (strain ATCC BAA-680 / CLIP 11262).